Reading from the N-terminus, the 280-residue chain is Tryptophan 2,3-dioxygenase (280 aa).

Substrate-binding positions include 49-53 (FIIIH), Tyr111, and Arg115. His238 serves as a coordination point for heme. Thr252 is a binding site for substrate.

The protein belongs to the tryptophan 2,3-dioxygenase family. As to quaternary structure, homotetramer. Requires heme as cofactor.

The enzyme catalyses L-tryptophan + O2 = N-formyl-L-kynurenine. Its pathway is amino-acid degradation; L-tryptophan degradation via kynurenine pathway; L-kynurenine from L-tryptophan: step 1/2. In terms of biological role, heme-dependent dioxygenase that catalyzes the oxidative cleavage of the L-tryptophan (L-Trp) pyrrole ring and converts L-tryptophan to N-formyl-L-kynurenine. Catalyzes the oxidative cleavage of the indole moiety. In Geobacillus thermodenitrificans (strain NG80-2), this protein is Tryptophan 2,3-dioxygenase.